A 67-amino-acid polypeptide reads, in one-letter code: DNA-directed RNA polymerase subunit omega (67 aa).

Belongs to the RNA polymerase subunit omega family. As to quaternary structure, the RNAP catalytic core consists of 2 alpha, 1 beta, 1 beta' and 1 omega subunit. When a sigma factor is associated with the core the holoenzyme is formed, which can initiate transcription.

It carries out the reaction RNA(n) + a ribonucleoside 5'-triphosphate = RNA(n+1) + diphosphate. Its function is as follows. Promotes RNA polymerase assembly. Latches the N- and C-terminal regions of the beta' subunit thereby facilitating its interaction with the beta and alpha subunits. This chain is DNA-directed RNA polymerase subunit omega, found in Paraburkholderia phymatum (strain DSM 17167 / CIP 108236 / LMG 21445 / STM815) (Burkholderia phymatum).